The primary structure comprises 20 residues: Thylakoid lumenal 18.4 kDa protein (20 aa).

Its subcellular location is the plastid. It is found in the chloroplast thylakoid lumen. The protein is Thylakoid lumenal 18.4 kDa protein of Spinacia oleracea (Spinach).